Here is a 292-residue protein sequence, read N- to C-terminus: Mycothiol acetyltransferase (292 aa).

N-acetyltransferase domains lie at 2–138 (AEVV…PSAP) and 141–292 (VTVR…YAHS). Glu33 contacts 1D-myo-inositol 2-(L-cysteinylamino)-2-deoxy-alpha-D-glucopyranoside. 68–70 (AVV) provides a ligand contact to acetyl-CoA. 1D-myo-inositol 2-(L-cysteinylamino)-2-deoxy-alpha-D-glucopyranoside-binding residues include Glu168, Lys215, and Glu225. Residues 229–231 (VAV) and 236–242 (QGRGLGR) contribute to the acetyl-CoA site. Tyr263 provides a ligand contact to 1D-myo-inositol 2-(L-cysteinylamino)-2-deoxy-alpha-D-glucopyranoside. Position 268–273 (268–273 (NAAALH)) interacts with acetyl-CoA.

The protein belongs to the acetyltransferase family. MshD subfamily. Monomer.

The enzyme catalyses 1D-myo-inositol 2-(L-cysteinylamino)-2-deoxy-alpha-D-glucopyranoside + acetyl-CoA = mycothiol + CoA + H(+). Catalyzes the transfer of acetyl from acetyl-CoA to desacetylmycothiol (Cys-GlcN-Ins) to form mycothiol. The sequence is that of Mycothiol acetyltransferase from Tsukamurella paurometabola (strain ATCC 8368 / DSM 20162 / CCUG 35730 / CIP 100753 / JCM 10117 / KCTC 9821 / NBRC 16120 / NCIMB 702349 / NCTC 13040) (Corynebacterium paurometabolum).